Consider the following 467-residue polypeptide: Abscisic acid 8'-hydroxylase 1 (467 aa).

The chain crosses the membrane as a helical span at residues 5-24; the sequence is ALFLTLFAGSLFLYFLRCLI. Cys411 serves as a coordination point for heme.

The protein belongs to the cytochrome P450 family. The cofactor is heme. As to expression, mainly expressed in flowers, siliques, roots and stems. Lower expression in rosette leaves and dry seeds. Expressed in vascular tissues of embryo during the seed development.

Its subcellular location is the membrane. The enzyme catalyses 2-cis-(+)-abscisate + reduced [NADPH--hemoprotein reductase] + O2 = (+)-8'-hydroxyabscisate + oxidized [NADPH--hemoprotein reductase] + H2O + H(+). The protein operates within plant hormone degradation; abscisic acid degradation. Functionally, involved in the oxidative degradation of abscisic acid. Plays an important role in determining abscisic acid levels in dry seeds and in the control of postgermination growth. In Arabidopsis thaliana (Mouse-ear cress), this protein is Abscisic acid 8'-hydroxylase 1 (CYP707A1).